The sequence spans 335 residues: Glyceraldehyde-3-phosphate dehydrogenase (335 aa).

Residues 12 to 13 (RI), Asp-34, and Arg-79 contribute to the NAD(+) site. D-glyceraldehyde 3-phosphate contacts are provided by residues 150–152 (SCT), Thr-181, 210–211 (TG), and Arg-233. The active-site Nucleophile is Cys-151. Residue Asn-315 participates in NAD(+) binding.

It belongs to the glyceraldehyde-3-phosphate dehydrogenase family. In terms of assembly, homotetramer.

It is found in the cytoplasm. It catalyses the reaction D-glyceraldehyde 3-phosphate + phosphate + NAD(+) = (2R)-3-phospho-glyceroyl phosphate + NADH + H(+). It participates in carbohydrate degradation; glycolysis; pyruvate from D-glyceraldehyde 3-phosphate: step 1/5. In Ogataea parapolymorpha (strain ATCC 26012 / BCRC 20466 / JCM 22074 / NRRL Y-7560 / DL-1) (Yeast), this protein is Glyceraldehyde-3-phosphate dehydrogenase (GPD).